Consider the following 111-residue polypeptide: Large ribosomal subunit protein uL22 (111 aa).

This sequence belongs to the universal ribosomal protein uL22 family. Part of the 50S ribosomal subunit.

Its function is as follows. This protein binds specifically to 23S rRNA; its binding is stimulated by other ribosomal proteins, e.g. L4, L17, and L20. It is important during the early stages of 50S assembly. It makes multiple contacts with different domains of the 23S rRNA in the assembled 50S subunit and ribosome. In terms of biological role, the globular domain of the protein is located near the polypeptide exit tunnel on the outside of the subunit, while an extended beta-hairpin is found that lines the wall of the exit tunnel in the center of the 70S ribosome. The sequence is that of Large ribosomal subunit protein uL22 from Chlamydia caviae (strain ATCC VR-813 / DSM 19441 / 03DC25 / GPIC) (Chlamydophila caviae).